The sequence spans 765 residues: Putative ankyrin repeat protein L371 (765 aa).

ANK repeat units follow at residues 60-89 (NGNYMIFFAIIMNSSTILKKLIKYGARLDV), 93-122 (EGNSVMYYPIKFGYYEIIDVLIDYDSKIIG), 132-161 (KGSVPLFYAIKYRNKYALQQLLSKDANANY), 165-194 (DNVNALHMAVLKKDISMVKLVIKHIKNLNA), 198-227 (QGSTALHYACNFQLYDITKLLLDNGADQNI), 232-261 (LDFYPIFYSVIQNDINISKLLVDYGANPNH), 265-295 (EGNTILHYCVIYNHMEIFDYIMNNYVIRCRS), 322-353 (DGLTVVHLMLYDYKEEYDNFLKKLIPYCNLNY), and 357-395 (TGNTILHLIAENNIWNKFDNLLNVKKLNIFIRNNNGKTV).

This chain is Putative ankyrin repeat protein L371, found in Acanthamoeba polyphaga mimivirus (APMV).